A 347-amino-acid chain; its full sequence is Doublecortin domain-containing protein 2C (347 aa).

2 consecutive Doublecortin domains span residues Lys-16–Ile-98 and Arg-136–Trp-217. Residues Lys-235–Ser-260 form a disordered region. Over residues Lys-241–Leu-251 the composition is skewed to basic and acidic residues.

Its subcellular location is the cell projection. It is found in the cilium. It localises to the flagellum. The protein localises to the cytoplasm. In Mus musculus (Mouse), this protein is Doublecortin domain-containing protein 2C.